Reading from the N-terminus, the 204-residue chain is NADH-ubiquinone oxidoreductase subunit 9 (204 aa).

It belongs to the complex I 30 kDa subunit family. In terms of assembly, complex I is composed of about 30 different subunits.

Its subcellular location is the mitochondrion inner membrane. It carries out the reaction a ubiquinone + NADH + 5 H(+)(in) = a ubiquinol + NAD(+) + 4 H(+)(out). Core subunit of the mitochondrial membrane respiratory chain NADH dehydrogenase (Complex I) that is believed to belong to the minimal assembly required for catalysis. Complex I functions in the transfer of electrons from NADH to the respiratory chain. The immediate electron acceptor for the enzyme is believed to be ubiquinone. In Reclinomonas americana, this protein is NADH-ubiquinone oxidoreductase subunit 9 (NAD9).